Consider the following 602-residue polypeptide: Sodium- and chloride-dependent GABA transporter 2 (602 aa).

The Cytoplasmic segment spans residues 1–40; sequence MDSRVSGTTSNGETKPVCPGLEKAAEDGALQREQWSNKME. 3 consecutive transmembrane segments (helical) span residues 41–61, 68–88, and 121–141; these read FLLS…FPYL, GAFF…VFLL, and IVTL…FYLF. The Extracellular segment spans residues 142–206; it reads SSFTIDLPWG…GIQHLGALRW (65 aa). A disulfide bridge connects residues Cys153 and Cys162. N-linked (GlcNAc...) asparagine glycans are attached at residues Asn169 and Asn173. 2 consecutive transmembrane segments (helical) span residues 207 to 227 and 233 to 253; these read ELAL…WKGV and VVYF…IRGV. Asn269 carries an N-linked (GlcNAc...) asparagine glycan. 7 consecutive transmembrane segments (helical) span residues 282–302, 319–339, 366–386, 418–438, 453–473, 490–510, and 528–548; these read AGTQ…ALGS, FLNS…LGFM, VVML…VVLL, VLIL…LTEG, GMCL…AYGA, PLIK…TFLF, and WWGD…IPAW. The Cytoplasmic segment spans residues 549–602; the sequence is SCYKLSTLKGSFRERVRQLLCPAKDLPQGHREGPSAPATPRTSLLILTELEPHH. Residue Thr587 is modified to Phosphothreonine. Residue Ser591 is modified to Phosphoserine.

Belongs to the sodium:neurotransmitter symporter (SNF) (TC 2.A.22) family. SLC6A13 subfamily.

The protein resides in the cell membrane. It is found in the basolateral cell membrane. It catalyses the reaction 4-aminobutanoate(out) + chloride(out) + 2 Na(+)(out) = 4-aminobutanoate(in) + chloride(in) + 2 Na(+)(in). It carries out the reaction taurine(out) + chloride(out) + 2 Na(+)(out) = taurine(in) + chloride(in) + 2 Na(+)(in). The catalysed reaction is beta-alanine(out) + chloride(out) + 2 Na(+)(out) = beta-alanine(in) + chloride(in) + 2 Na(+)(in). The enzyme catalyses hypotaurine(out) + chloride(out) + 2 Na(+)(out) = hypotaurine(in) + chloride(in) + 2 Na(+)(in). Functionally, mediates sodium- and chloride-dependent transport of gamma-aminobutyric acid (GABA). Can also mediate transport of beta-alanine, taurine and hypotaurine. This chain is Sodium- and chloride-dependent GABA transporter 2 (SLC6A13), found in Bos taurus (Bovine).